Reading from the N-terminus, the 302-residue chain is Serine/threonine-protein phosphatase alpha-2 isoform (302 aa).

Positions 62, 64, 90, and 122 each coordinate Mn(2+). His123 acts as the Proton donor in catalysis. Mn(2+) is bound by residues His171 and His246.

The protein belongs to the PPP phosphatase family. PP-1 subfamily. Interacts with Nop17l. Interacts with uri; uri inhibits Pp1-87B phosphatase activity. Interacts with Rif1. The cofactor is Mn(2+).

It is found in the cytoplasm. It carries out the reaction O-phospho-L-seryl-[protein] + H2O = L-seryl-[protein] + phosphate. The enzyme catalyses O-phospho-L-threonyl-[protein] + H2O = L-threonyl-[protein] + phosphate. Is essential for the regulation of mitotic chromosomal segregation as well as regulation of chromatin condensation during interphase. This is Serine/threonine-protein phosphatase alpha-2 isoform (Pp1-87B) from Drosophila melanogaster (Fruit fly).